The primary structure comprises 152 residues: Deoxyuridine 5'-triphosphate nucleotidohydrolase (152 aa).

Substrate is bound by residues 71-73 (RSG), asparagine 84, 88-90 (LID), and methionine 98.

Belongs to the dUTPase family. Mg(2+) is required as a cofactor.

It carries out the reaction dUTP + H2O = dUMP + diphosphate + H(+). The protein operates within pyrimidine metabolism; dUMP biosynthesis; dUMP from dCTP (dUTP route): step 2/2. This enzyme is involved in nucleotide metabolism: it produces dUMP, the immediate precursor of thymidine nucleotides and it decreases the intracellular concentration of dUTP so that uracil cannot be incorporated into DNA. The polypeptide is Deoxyuridine 5'-triphosphate nucleotidohydrolase (Pectobacterium carotovorum subsp. carotovorum (strain PC1)).